The primary structure comprises 785 residues: Adhesion G-protein coupled receptor G7 (785 aa).

An N-terminal signal peptide occupies residues 1–26; it reads MRSCRSCNVRVLVAIVCGLLTGIVLG. Over 27–435 the chain is Extracellular; sequence LGIWRMVIRI…KYPKSLDILS (409 aa). N-linked (GlcNAc...) asparagine glycosylation is found at Asn82, Asn122, Asn133, Asn152, Asn159, Asn178, Asn195, Asn239, Asn289, Asn348, Asn400, and Asn408. The 155-residue stretch at 271 to 425 folds into the GAIN-B domain; sequence FSVQKGSSNS…AVLMSFKKDY (155 aa). Cystine bridges form between Cys380–Cys407 and Cys395–Cys409. Residues 380-425 are GPS; the sequence is CVYWNFLINDWDTQGCQKTGNTTEFLRCNCSHTTNFAVLMSFKKDY. The chain crosses the membrane as a helical span at residues 436–456; it reads NIGCALSIAGLALTILFQILT. Over 457–465 the chain is Cytoplasmic; it reads RKIRKTSVT. The helical transmembrane segment at 466–486 threads the bilayer; it reads WVLVSLCSSMLIFNLLFVFGI. At 487–523 the chain is on the extracellular side; sequence ENSNKNLKTSDSDINVKPENNKIPESDTIETPNPSCT. Residues 524–544 traverse the membrane as a helical segment; sequence AIAALLHYFLLVTFTWNGLSA. Topologically, residues 545 to 561 are cytoplasmic; sequence TQLYFLLIRTMKPLPRH. Residues 562–582 form a helical membrane-spanning segment; sequence FIIFISLVGWGVPAIIVGVTI. Residues 583–623 are Extracellular-facing; that stretch reads GSIYALSGNKRYWELDYRQEEICWLAVPKDNDYARSPLLWS. Residues 624–644 traverse the membrane as a helical segment; sequence FIIPVTIILITNITIFVIITV. Residues 645–668 are Cytoplasmic-facing; the sequence is KVLWKNNQNLTSTKKVSSLKKVFS. Residues 669–689 form a helical membrane-spanning segment; that stretch reads TLSIAVVFGVTWILAYAMLIS. Topologically, residues 690 to 694 are extracellular; sequence NDDIR. A helical membrane pass occupies residues 695–715; sequence IVFSYIFCLFNTTQGLQIFIL. Residues 716–785 are Cytoplasmic-facing; the sequence is YTVRTKVFQS…SGMTEETSLS (70 aa).

It belongs to the G-protein coupled receptor 2 family. Adhesion G-protein coupled receptor (ADGR) subfamily. As to expression, selectively expressed in the intestinal tissues.

The protein localises to the membrane. Its function is as follows. Orphan receptor. The protein is Adhesion G-protein coupled receptor G7 (Adgrg7) of Mus musculus (Mouse).